The following is a 161-amino-acid chain: Nucleotide-binding protein RSc2549 (161 aa).

This sequence belongs to the YajQ family.

Its function is as follows. Nucleotide-binding protein. The protein is Nucleotide-binding protein RSc2549 of Ralstonia nicotianae (strain ATCC BAA-1114 / GMI1000) (Ralstonia solanacearum).